The following is a 298-amino-acid chain: MQLLKASDIISHLQIDGIFPGGNAIPCTHLNNYMNIKEKQLMNTIADVQSSRDLRNLPINQVGIKDLRFPITLQTAEGIQSTVARLTMTVYLPAEQKGTHMSRFVALMEQHTEALDFAQLRRLTAEMVALLDSRAGKISVSFPFFRKKTAPVSGIRSLLDYDVSLTGEMKDGAYGHSMKVMIPVTSLCPCSKEISQYGAHNQRSHVTVSLTADAEVGIEEVIDYVEAQASCQLYGLLKRPDEKYVTEKAYENPKFVEDMVRDVATSLIADKRIKSFVVESENFESIHNHSAYAYIAYP.

It belongs to the GTP cyclohydrolase IV family.

It catalyses the reaction GTP + H2O = 7,8-dihydroneopterin 3'-triphosphate + formate + H(+). Its pathway is cofactor biosynthesis; 7,8-dihydroneopterin triphosphate biosynthesis; 7,8-dihydroneopterin triphosphate from GTP: step 1/1. Its function is as follows. Converts GTP to 7,8-dihydroneopterin triphosphate. The chain is GTP cyclohydrolase FolE2 from Neisseria meningitidis serogroup A / serotype 4A (strain DSM 15465 / Z2491).